Here is a 321-residue protein sequence, read N- to C-terminus: Cathepsin O (321 aa).

The first 23 residues, 1 to 23 (MDVRALPWLPWLLWLLCRGGGDA), serve as a signal peptide directing secretion. Residues 24-107 (DSRAPFTPTW…EVHMSIPNVS (84 aa)) constitute a propeptide, activation peptide. N-linked (GlcNAc...) asparagine glycans are attached at residues Asn-62 and Asn-105. Intrachain disulfides connect Cys-129/Cys-170, Cys-163/Cys-204, and Cys-262/Cys-310. Cys-132 is a catalytic residue. Residues His-269 and Asn-289 contribute to the active site.

This sequence belongs to the peptidase C1 family. Expressed in all tissues examined. High levels seen in the ovary, kidney and placenta while low levels seen in thymus and skeletal muscle.

It localises to the lysosome. It catalyses the reaction The recombinant human enzyme hydrolyzes synthetic endopeptidase substrates including Z-Phe-Arg-NHMec and Z-Arg-Arg-NHMec.. In terms of biological role, proteolytic enzyme possibly involved in normal cellular protein degradation and turnover. The polypeptide is Cathepsin O (CTSO) (Homo sapiens (Human)).